The following is a 236-amino-acid chain: ADTIVAVELDTYPNTDIGDPNYQHIGINIKSIRSKATTRWNVQDGKVGTAHISYNSVAKRLSAIVSYPGGSSATVSYDVDLNNILPEWVRVGLSASTGLYKETNTILSWSFTSKLKTNSTADAQSLHFTFNQFSQNPKDLILQGDASTDSDGNLQLTRVSNGSPQSNSVGRALYYAPVHVWDKSAVVASFDATFTFLIKSTDSDIADGIAWFIANTDSSIPHGSGGRLLGLFPDAN.

Mn(2+) is bound by residues Glu8 and Asp10. Residues Asp10, Tyr12, Asn14, and Asp19 each coordinate Ca(2+). Position 12 (Tyr12) interacts with a carbohydrate. Residues Asp19, His24, and Ser34 each coordinate Mn(2+). An a carbohydrate-binding site is contributed by 99 to 100 (LY). Residue Asp207 coordinates Ca(2+). Arg227 provides a ligand contact to a carbohydrate.

The protein belongs to the leguminous lectin family. Equilibrium between homodimer and homotetramer. Oligomerization is pH-dependent with homotetramers forming at pH 6.5 and above. The beta and gamma chains are produced by partial proteolytic processing of the lectin alpha chain by an asparaginyl endopeptidase. Mixture of 60% alpha lectin and 40% of its beta and gamma proteolytic fragments. As to expression, seed.

Functionally, D-mannose/D-glucose-binding lectin. Has anti-inflammatory activity in rats. Induces histamine release in mast cells from rat. Induces lymphocyte proliferation and IFNG production. The chain is Lectin alpha chain from Cratylia argentea (Cratylia floribunda).